The primary structure comprises 148 residues: Arginine repressor (148 aa).

It belongs to the ArgR family.

Its subcellular location is the cytoplasm. The protein operates within amino-acid biosynthesis; L-arginine biosynthesis [regulation]. Functionally, regulates arginine biosynthesis genes. The protein is Arginine repressor of Chlorobium chlorochromatii (strain CaD3).